Here is a 655-residue protein sequence, read N- to C-terminus: p-hydroxybenzoic acid efflux pump subunit AaeB (655 aa).

A run of 11 helical transmembrane segments spans residues 13 to 33 (FAVKLACAIVLALFIGFHFQL), 38 to 58 (WAVLTAAIVAAGPAFAAGGEP), 69 to 89 (LRIIGTFIGCIAALIIIISMI), 93 to 113 (LLMILVCCVWAGFCTWISSLV), 121 to 141 (WGLSGYTALIIVITIQMEPLL), 152 to 172 (EIVIGIGCAILADLLFSPRSI), 370 to 390 (LFWLWTGWTSGNGAMVMIAVV), 407 to 427 (FIYGTLAALPLGLLYFLVIIP), 431 to 451 (QSMLLLCLSLAVLGFFIGIEV), 459 to 479 (MGALASTINIIVLDNPMTFHF), and 482 to 502 (FLDSALGQIVGCMLAFIVILL).

It belongs to the aromatic acid exporter ArAE (TC 2.A.85) family.

The protein resides in the cell inner membrane. In terms of biological role, forms an efflux pump with AaeA. Could function as a metabolic relief valve, allowing to eliminate certain compounds when they accumulate to high levels in the cell. The sequence is that of p-hydroxybenzoic acid efflux pump subunit AaeB from Salmonella heidelberg (strain SL476).